Reading from the N-terminus, the 199-residue chain is MSEKLQDLAAHVAQQRPGDVISAEVVQGELTVTVKPEGIADFVRFLRDDAGCRFTTLVDLTAVDWPERVERFEMVWHFLSMWKNQRIRVKAGLAEDAMCPSIVEVYPAANWYEREVFDMFGILFSGHPDLRRLLTDYGFRGHPLRKDFPTTGYIELRYDEVQKRVVYEPVKLAQEYRQFDFLSPWEGAQSVLPGDEKRS.

This sequence belongs to the complex I 30 kDa subunit family. In terms of assembly, NDH-1 is composed of 14 different subunits. Subunits NuoB, C, D, E, F, and G constitute the peripheral sector of the complex.

Its subcellular location is the cell inner membrane. The enzyme catalyses a quinone + NADH + 5 H(+)(in) = a quinol + NAD(+) + 4 H(+)(out). NDH-1 shuttles electrons from NADH, via FMN and iron-sulfur (Fe-S) centers, to quinones in the respiratory chain. The immediate electron acceptor for the enzyme in this species is believed to be ubiquinone. Couples the redox reaction to proton translocation (for every two electrons transferred, four hydrogen ions are translocated across the cytoplasmic membrane), and thus conserves the redox energy in a proton gradient. In Rhodobacter capsulatus (Rhodopseudomonas capsulata), this protein is NADH-quinone oxidoreductase subunit C.